Reading from the N-terminus, the 104-residue chain is U-scoloptoxin(10)-Cw1a (104 aa).

Positions 1-23 (MNKTVAVFFAVICVICVIKSCKT) are cleaved as a signal peptide.

Belongs to the scoloptoxin-10 family. Contains 3 disulfide bonds. In terms of tissue distribution, expressed by the venom gland.

The protein resides in the secreted. The protein is U-scoloptoxin(10)-Cw1a of Cormocephalus westwoodi (Westwood's green centipede).